Consider the following 157-residue polypeptide: 17.8 kDa class I heat shock protein (157 aa).

The sHSP domain maps to 43-157; it reads ETAAFVNTHI…PEVKAIDISG (115 aa).

It belongs to the small heat shock protein (HSP20) family. Forms oligomeric structures.

It localises to the cytoplasm. The polypeptide is 17.8 kDa class I heat shock protein (Daucus carota (Wild carrot)).